Reading from the N-terminus, the 195-residue chain is Protein GrpE (195 aa).

The tract at residues 1-30 (MSEQEKVEQEEISAELETQNEQEKPMEETE) is disordered. Over residues 10–20 (EEISAELETQN) the composition is skewed to acidic residues.

It belongs to the GrpE family. In terms of assembly, homodimer.

Its subcellular location is the cytoplasm. Functionally, participates actively in the response to hyperosmotic and heat shock by preventing the aggregation of stress-denatured proteins, in association with DnaK and GrpE. It is the nucleotide exchange factor for DnaK and may function as a thermosensor. Unfolded proteins bind initially to DnaJ; upon interaction with the DnaJ-bound protein, DnaK hydrolyzes its bound ATP, resulting in the formation of a stable complex. GrpE releases ADP from DnaK; ATP binding to DnaK triggers the release of the substrate protein, thus completing the reaction cycle. Several rounds of ATP-dependent interactions between DnaJ, DnaK and GrpE are required for fully efficient folding. This chain is Protein GrpE, found in Histophilus somni (strain 2336) (Haemophilus somnus).